We begin with the raw amino-acid sequence, 360 residues long: DNA replication and repair protein RecF (360 aa).

ATP is bound at residue 30 to 37 (GHNGSGKT).

Belongs to the RecF family.

It localises to the cytoplasm. In terms of biological role, the RecF protein is involved in DNA metabolism; it is required for DNA replication and normal SOS inducibility. RecF binds preferentially to single-stranded, linear DNA. It also seems to bind ATP. This is DNA replication and repair protein RecF from Shewanella sediminis (strain HAW-EB3).